Reading from the N-terminus, the 1160-residue chain is Pesticidal crystal protein Cry1Db (1160 aa).

It belongs to the delta endotoxin family.

Functionally, promotes colloidosmotic lysis by binding to the midgut epithelial cells of insects. In Bacillus thuringiensis, this protein is Pesticidal crystal protein Cry1Db (cry1Db).